The primary structure comprises 133 residues: DNA-directed RNA polymerase subunit omega (133 aa).

Belongs to the RNA polymerase subunit omega family. As to quaternary structure, the RNAP catalytic core consists of 2 alpha, 1 beta, 1 beta' and 1 omega subunit. When a sigma factor is associated with the core the holoenzyme is formed, which can initiate transcription.

The enzyme catalyses RNA(n) + a ribonucleoside 5'-triphosphate = RNA(n+1) + diphosphate. In terms of biological role, promotes RNA polymerase assembly. Latches the N- and C-terminal regions of the beta' subunit thereby facilitating its interaction with the beta and alpha subunits. The protein is DNA-directed RNA polymerase subunit omega of Mesorhizobium japonicum (strain LMG 29417 / CECT 9101 / MAFF 303099) (Mesorhizobium loti (strain MAFF 303099)).